We begin with the raw amino-acid sequence, 839 residues long: Small conductance calcium-activated potassium channel protein 2 (839 aa).

Disordered regions lie at residues 1–33, 64–115, 195–258, and 280–375; these read MPIV…QESP, QRGF…QQPG, ALRQ…RRES, and SNLS…KKNQ. Low complexity-rich tracts occupy residues 198–212 and 219–235; these read QQYA…QYHQ and ATSP…GPPL. Residues 236 to 253 are compositionally biased toward basic residues; sequence SHHHHHPHPAHHQHHQPQ. Residues 313-326 show a composition bias toward low complexity; the sequence is SSPSAAAAASSSAP. A compositionally biased stretch (gly residues) spans 345–363; that stretch reads GTGGGGSTGGGGGGSGHGS. Residues 398–418 form a helical membrane-spanning segment; sequence ALIFGMFGIVVMVIETELSWG. Tyr420 is subject to Phosphotyrosine. Residues 428 to 448 traverse the membrane as a helical segment; sequence LALKCLISLSTIILLGLIIVY. A helical transmembrane segment spans residues 474-494; sequence IFFICLEILVCAIHPIPGNYT. A helical transmembrane segment spans residues 516–536; that stretch reads IILSIPMFLRLYLIARVMLLH. A helical membrane pass occupies residues 565–585; that stretch reads LMTICPGTVLLVFSISLWIIA. The segment at residues 605 to 625 is an intramembrane region (pore-forming); it reads FLGAMWLISITFLSIGYGDMV. Residues 634–654 form a helical membrane-spanning segment; it reads VCLLTGIMGAGCTALVVAVVA. Positions 672 to 748 are calmodulin-binding; the sequence is DTQLTKRVKN…LVDLAKTQNI (77 aa). The span at 810–819 shows a compositional bias: basic and acidic residues; that stretch reads HVSYNAERSR. The interval 810 to 839 is disordered; sequence HVSYNAERSRSSSRRRRSSSTAPPTSSESS. Residues 828-839 show a composition bias toward low complexity; it reads SSTAPPTSSESS.

It belongs to the potassium channel KCNN family. KCa2.2/KCNN2 subfamily. As to quaternary structure, homodimer. Heteromultimer with KCNN1 and KCNN3. The complex is composed of 4 channel subunits each of which binds to a calmodulin subunit which regulates the channel activity through calcium-binding. Interacts (via N-terminal domain) with MPP2. Expressed in atrial and ventricular myocytes with higher levels in atrial myocytes (at protein level). Highly expressed in brain, liver and colon with low levels in kidney and testis. In colon, detected in smooth muscle cells.

Its subcellular location is the membrane. The protein localises to the cytoplasm. It is found in the myofibril. It localises to the sarcomere. The protein resides in the z line. It catalyses the reaction K(+)(in) = K(+)(out). Its activity is regulated as follows. Inhibited by bee venom neurotoxin apamin. Inhibited by UCL 1684 and tetraethylammonium (TEA). Its function is as follows. Small conductance calcium-activated potassium channel that mediates the voltage-independent transmembrane transfer of potassium across the cell membrane through a constitutive interaction with calmodulin which binds the intracellular calcium allowing its opening. The current is characterized by a voltage-independent activation, an intracellular calcium concentration increase-dependent activation and a single-channel conductance of about 3 picosiemens. Also presents an inwardly rectifying current, thus reducing its already small outward conductance of potassium ions, which is particularly the case when the membrane potential displays positive values, above + 20 mV. The inward rectification could be due to a blockade of the outward current by intracellular divalent cations such as calcium and magnesium and could also be due to an intrinsic property of the channel pore, independent of intracellular divalent ions. There are three positively charged amino acids in the S6 transmembrane domain, close to the pore, that collectively control the conductance and rectification through an electrostatic mechanism. Additionally, electrostatic contributions from these residues also play an important role in determining the intrinsic open probability of the channel in the absence of calcium, affecting the apparent calcium affinity for activation. Forms an heteromeric complex with calmodulin, which is constitutively associated in a calcium-independent manner. Channel opening is triggered when calcium binds the calmodulin resulting in a rotary movement leading to the formation of the dimeric complex to open the gate. Plays a role in the repolarization phase of cardiac action potential. This is Small conductance calcium-activated potassium channel protein 2 from Mus musculus (Mouse).